The sequence spans 494 residues: BTB/POZ domain and ankyrin repeat-containing protein NH5.2 (494 aa).

The BTB domain occupies 25 to 131 (SDVAFSVEGR…LYSGQASVAA (107 aa)). Residues 60–95 (NHQPPPPPPPPLNWPTAGGGGGGSGGGGRGGAGGGG) are disordered. The segment covering 61 to 72 (HQPPPPPPPPLN) has biased composition (pro residues). Gly residues predominate over residues 76–95 (AGGGGGGSGGGGRGGAGGGG). A C2HC NPR-type zinc finger spans residues 137-151 (LPGCGARGCWHTRCG). Zn(2+) is bound by residues Cys140, Cys145, His147, and Cys150. ANK repeat units follow at residues 275-303 (NKIR…GLDL), 304-334 (DDAL…DVNS), 339-368 (TGKT…DPNS), and 372-406 (DGVT…KLRL). 2 disordered regions span residues 421 to 443 (DDGA…PRSD) and 471 to 494 (GEGR…NGFA).

The protein belongs to the plant 'ANKYRIN-BTB/POZ' family. 'NOOT-BOP-COCH-like' (NBCL) subfamily. As to quaternary structure, homodimer. Interacts with TGAL5, TGAL7, TGAL8 and TGAL9.

It is found in the nucleus. The protein resides in the cytoplasm. It participates in protein modification; protein ubiquitination. Functionally, may act as a substrate-specific adapter of an E3 ubiquitin-protein ligase complex (CUL3-RBX1-BTB) which mediates the ubiquitination and subsequent proteasomal degradation of target proteins. Transcriptional co-regulator involved in the promotion of leaf and floral meristem fate and determinacy. Required for the abscission of senescent organs, probably by regulating the cell wall disorganization in abscission zones (AZs, e.g. pulvini at the base of leaves). This is BTB/POZ domain and ankyrin repeat-containing protein NH5.2 from Oryza sativa subsp. japonica (Rice).